The primary structure comprises 278 residues: Antiviral protein MAP (278 aa).

The signal sequence occupies residues 1 to 28; it reads MLTTTKVFFLLLTTWITWYAIVNPQSRA. Residues Cys64 and Cys248 are joined by a disulfide bond. Glu196 is a catalytic residue.

It carries out the reaction Endohydrolysis of the N-glycosidic bond at one specific adenosine on the 28S rRNA.. Its function is as follows. Inhibits viral infection of plants, and protein synthesis in vitro. The chain is Antiviral protein MAP from Mirabilis jalapa (Garden four-o'clock).